A 150-amino-acid chain; its full sequence is Large ribosomal subunit protein uL13 (150 aa).

Residues 128–150 form a disordered region; that stretch reads GSDHPHSAQEPKILSLNSESVTK.

The protein belongs to the universal ribosomal protein uL13 family. In terms of assembly, part of the 50S ribosomal subunit.

Functionally, this protein is one of the early assembly proteins of the 50S ribosomal subunit, although it is not seen to bind rRNA by itself. It is important during the early stages of 50S assembly. This chain is Large ribosomal subunit protein uL13, found in Prochlorococcus marinus (strain NATL1A).